The following is a 419-amino-acid chain: O-antigen ligase (419 aa).

Over 1–19 (MLTSFKLHSLKPYTLKSSM) the chain is Cytoplasmic. The chain crosses the membrane as a helical span at residues 20-38 (ILEIITYILCFFSMIIAFV). Over 39–43 (DNTFS) the chain is Periplasmic. A helical membrane pass occupies residues 44–61 (IKIYNITAIVCLLSLILR). The Cytoplasmic portion of the chain corresponds to 62–71 (GRQENYNIKN). A helical membrane pass occupies residues 72 to 91 (LILPLSIFLIGLLDLIWYSA). The Periplasmic portion of the chain corresponds to 92–107 (FKVDNSPFRATYHSYL). The helical transmembrane segment at 108-125 (NTAKIFIFGSFIVFLTLT) threads the bilayer. The Cytoplasmic portion of the chain corresponds to 126 to 134 (SQLKSKKES). A helical transmembrane segment spans residues 135-153 (VLYTLYSLSFLIAGYAMYI). The Periplasmic segment spans residues 154 to 167 (NSIHENDRISFGVG). Residues 168-187 (TATGAAYSTMLIGIVSGVAI) traverse the membrane as a helical segment. Residues 188-194 (LYTKKNH) lie on the Cytoplasmic side of the membrane. A helical membrane pass occupies residues 195–211 (PFLFLLNSCAVLYVLAL). Topologically, residues 212-216 (TQTRA) are periplasmic. The chain crosses the membrane as a helical span at residues 217-234 (TLLLFPIICVAALIAYYN). Residues 235–240 (KSPKKF) lie on the Cytoplasmic side of the membrane. Residues 241–259 (TSSIVLLIAILASIVIIFN) traverse the membrane as a helical segment. The Periplasmic segment spans residues 260 to 348 (KPIQNRYNEA…NEIIEAGSLK (89 aa)). The helical transmembrane segment at 349 to 367 (GLMGIFSTLFLYFSLFYIA) threads the bilayer. The Cytoplasmic portion of the chain corresponds to 368–372 (YKKRA). The helical transmembrane segment at 373–391 (LGLLILTLGIVGIGLSDVI) threads the bilayer. At 392 to 396 (IWARS) the chain is on the periplasmic side. A helical transmembrane segment spans residues 397 to 412 (IPIIIISAIVLLLVIN). Residues 413-419 (NRNNTIN) lie on the Cytoplasmic side of the membrane.

In terms of assembly, homodimer.

It localises to the cell inner membrane. It catalyses the reaction a lipid-linked O antigen + a lipid A-core oligosaccharide = a lipopolysaccharide + a polyisoprenyl diphosphate.. Its pathway is bacterial outer membrane biogenesis; lipopolysaccharide biosynthesis. Its activity is regulated as follows. Activity does not require ATP and magnesium ions. Its function is as follows. Transferase involved in the biosynthesis of the lipopolysaccharide (LPS). In vitro, catalyzes the transfer of a polymerized O-antigen molecule from its polyprenyl diphosphate membrane anchor to a terminal sugar of the lipid A-core oligosaccharide, finalizing the biosynthesis of the lipopolysaccharide. The enzyme is functional and can be used to give diverse hybrid O-antigens in vitro, but K12 strains do not produce the O-antigen in vivo due to mutations in the rfb gene cluster. K12 strains are phenotypically rough, their lipopolysaccharide having a complete core structure, but no O-antigen. In highly mucoid K12 strains, WaaL can ligate colanic acid (CA or M-antigen) repeats to a significant proportion of lipopolysaccharide (LPS) core acceptor molecules, forming the LPS glycoform M(LPS). The attachment point was identified as O-7 of the L-glycero-D-manno-heptose of the outer LPS core, the same position used for O-antigen ligation. Cannot catalyze ATP hydrolysis in vitro. This chain is O-antigen ligase, found in Escherichia coli (strain K12).